Here is a 22-residue protein sequence, read N- to C-terminus: GLWEKVKEKANELVSGIVEGVK.

Position 22 is a lysine amide (K22).

As to expression, expressed by the skin dorsal glands.

The protein resides in the secreted. Shows significant activity against Gram-positive organisms, but is less effective against Gram-negative organisms. This Ranoidea gracilenta (Dainty green tree frog) protein is Caerin-3.5.